A 261-amino-acid chain; its full sequence is ClpXP adapter protein SpxH (261 aa).

It belongs to the SpxH family. Interacts with Spx.

It localises to the cytoplasm. Its function is as follows. Adapter protein required for efficient degradation of Spx by ClpXP under non-stress conditions. Interaction with Spx stabilizes Spx and exposes the C-terminus of Spx for recognition and proteolysis by ClpXP. The sequence is that of ClpXP adapter protein SpxH from Staphylococcus aureus.